The following is a 183-amino-acid chain: Large ribosomal subunit protein uL6 (183 aa).

The protein belongs to the universal ribosomal protein uL6 family. In terms of assembly, part of the 50S ribosomal subunit.

In terms of biological role, this protein binds to the 23S rRNA, and is important in its secondary structure. It is located near the subunit interface in the base of the L7/L12 stalk, and near the tRNA binding site of the peptidyltransferase center. In Chlamydia pneumoniae (Chlamydophila pneumoniae), this protein is Large ribosomal subunit protein uL6.